The sequence spans 190 residues: Corticoliberin (190 aa).

The first 24 residues, methionine 1–alanine 24, serve as a signal peptide directing secretion. Positions leucine 25–arginine 147 are excised as a propeptide. Disordered stretches follow at residues glycine 33–proline 53 and proline 115–proline 151. Residues proline 41–proline 53 show a composition bias toward low complexity. The residue at position 188 (alanine 188) is an Alanine amide.

It belongs to the sauvagine/corticotropin-releasing factor/urotensin I family. Interacts (via C-terminus) with CRFR1 (via N-terminal extracellular domain). Produced by the hypothalamus.

It localises to the secreted. Its function is as follows. Hormone regulating the release of corticotropin from pituitary gland. Induces NLRP6 in intestinal epithelial cells, hence may influence gut microbiota profile. The sequence is that of Corticoliberin (CRH) from Ovis aries (Sheep).